Reading from the N-terminus, the 70-residue chain is Phycocyanin-645 alpha-2 chain (70 aa).

Arg16 is a (2R,3E)-phycocyanobilin binding site. The mesobiliverdin site is built by Cys18, Tyr26, and Lys41.

It belongs to the phycoerythrin family. In terms of assembly, heterotetramer of 2 different alpha chains and 2 identical beta chains which form 2 alpha-beta heterodimers within the heterotetramer. Contains one phycocyanobilin chromophore, one mesobiliverdin chromophore and one 15,16-dihydrobiliverdin chromophore with binding mediated by both the alpha and beta subunits.

It is found in the plastid. The protein resides in the chloroplast thylakoid membrane. In terms of biological role, light-harvesting photosynthetic tetrapyrrole chromophore-protein from the phycobiliprotein complex. This Chroomonas sp protein is Phycocyanin-645 alpha-2 chain.